The chain runs to 235 residues: Large ribosomal subunit protein uL3 (235 aa).

The protein belongs to the universal ribosomal protein uL3 family. In terms of assembly, part of the 50S ribosomal subunit. Forms a cluster with proteins L14 and L19.

In terms of biological role, one of the primary rRNA binding proteins, it binds directly near the 3'-end of the 23S rRNA, where it nucleates assembly of the 50S subunit. In Frankia casuarinae (strain DSM 45818 / CECT 9043 / HFP020203 / CcI3), this protein is Large ribosomal subunit protein uL3.